The chain runs to 283 residues: MAGNFWQSSHYLQWILDKQDLLKERQKDLKFLSEEEYWKLQIFFTNVIQALGEHLKLRQQVIATATVYFKRFYARYSLKSIDPVLMAPTCVFLASKVEEFGVVSNTRLIAAATSVLKTRFSYAFPKEFPYRMNHILECEFYLLELMDCCLIVYHPYRPLLQYVQDMGQEDMLLPLAWRIVNDTYRTDLCLLYPPFMIALACLHVACVVQQKDARQWFAELSVDMEKILEIIRVILKLYEQWKNFDERKEMATILSKMPKPKPPPNSEGEQGPNGSQNSSYSQS.

Residues Asn-46–Glu-144 enclose the Cyclin N-terminal domain. Residues Thr-252–Ser-283 form a disordered region. The segment covering Pro-272–Ser-283 has biased composition (polar residues). Ser-275 is modified (phosphoserine).

The protein belongs to the cyclin family. Cyclin C subfamily. Component of the Mediator complex, which is composed of MED1, MED4, MED6, MED7, MED8, MED9, MED10, MED11, MED12, MED13, MED13L, MED14, MED15, MED16, MED17, MED18, MED19, MED20, MED21, MED22, MED23, MED24, MED25, MED26, MED27, MED29, MED30, MED31, CCNC, CDK8 and CDC2L6/CDK11. The MED12, MED13, CCNC and CDK8 subunits form a distinct module termed the CDK8 module. Mediator containing the CDK8 module is less active than Mediator lacking this module in supporting transcriptional activation. Individual preparations of the Mediator complex lacking one or more distinct subunits have been variously termed ARC, CRSP, DRIP, PC2, SMCC and TRAP. The cylin/CDK pair formed by CCNC/CDK8 also associates with the large subunit of RNA polymerase II. Highest levels in pancreas. High levels in heart, liver, skeletal muscle and kidney. Low levels in brain.

The protein resides in the nucleus. Component of the Mediator complex, a coactivator involved in regulated gene transcription of nearly all RNA polymerase II-dependent genes. Mediator functions as a bridge to convey information from gene-specific regulatory proteins to the basal RNA polymerase II transcription machinery. Mediator is recruited to promoters by direct interactions with regulatory proteins and serves as a scaffold for the assembly of a functional preinitiation complex with RNA polymerase II and the general transcription factors. Binds to and activates cyclin-dependent kinase CDK8 that phosphorylates the CTD (C-terminal domain) of the large subunit of RNA polymerase II (RNAp II), which may inhibit the formation of a transcription initiation complex. This Homo sapiens (Human) protein is Cyclin-C (CCNC).